We begin with the raw amino-acid sequence, 514 residues long: HTH-type transcriptional regulatory protein TyrR (514 aa).

In terms of domain architecture, ACT spans 2–72 (RLEVFCEDRL…GVTDVRTVPW (71 aa)). In terms of domain architecture, PAS spans 78–120 (EHLALSALLEALPEPVLSLDMKSKIEMANPASCQLFAHTQDRM). Residues 206 to 428 (IIAVSAKMKH…VKNAIYRALT (223 aa)) form the Sigma-54 factor interaction domain. Residues 234 to 241 (GNTGTGKD) and 290 to 299 (ANGGSVLLDE) contribute to the ATP site. A DNA-binding region (H-T-H motif) is located at residues 482–502 (STRKLAKRLGVSHTAIANKLR).

As to quaternary structure, homodimer. In presence of tyrosine (or high concentrations of phenylalanine or tryptophan) and ATP, it self-associates to form an hexamer.

It localises to the cytoplasm. Its function is as follows. Dual transcriptional regulator of the TyrR regulon, which includes a number of genes coding for proteins involved in the biosynthesis or transport of the three aromatic amino acids, phenylalanine, tyrosine and tryptophan. These three aromatic amino acids act as effectors which bind to the TyrR protein to form an active regulatory protein. Acts by binding specifically to TyrR boxes in the promoter region of the target genes. The polypeptide is HTH-type transcriptional regulatory protein TyrR (Citrobacter braakii).